The following is a 91-amino-acid chain: Cell division protein FtsB (91 aa).

The Cytoplasmic portion of the chain corresponds to 1–3; sequence MRW. Residues 4–21 traverse the membrane as a helical segment; that stretch reads PVIILAVLVVVLQYPLWL. Topologically, residues 22–91 are periplasmic; the sequence is GKGGWLRVWE…EIFVQVPQKH (70 aa). The stretch at 28-72 forms a coiled coil; that stretch reads RVWEVDRKLHEQREENTRLEERNAGLDAEVRDLKSGNEAIEERAR.

This sequence belongs to the FtsB family. As to quaternary structure, part of a complex composed of FtsB, FtsL and FtsQ.

Its subcellular location is the cell inner membrane. Its function is as follows. Essential cell division protein. May link together the upstream cell division proteins, which are predominantly cytoplasmic, with the downstream cell division proteins, which are predominantly periplasmic. The protein is Cell division protein FtsB of Azoarcus sp. (strain BH72).